Consider the following 87-residue polypeptide: Defensin-like protein 81 (87 aa).

The signal sequence occupies residues 1 to 27; that stretch reads MTIKKFLPLLLSSLMVYSLILLPIISG. 4 disulfides stabilise this stretch: Cys-33-Cys-69, Cys-37-Cys-57, Cys-43-Cys-67, and Cys-47-Cys-68.

Belongs to the DEFL family.

It localises to the secreted. This Arabidopsis thaliana (Mouse-ear cress) protein is Defensin-like protein 81.